The sequence spans 644 residues: Pesticidal crystal protein Cry3Aa (644 aa).

Residues 1–13 show a composition bias toward basic and acidic residues; that stretch reads MNPNNRSEHDTIK. A disordered region spans residues 1-20; sequence MNPNNRSEHDTIKTTENNEV. Residues 1–57 constitute a propeptide, removed in mature form; it reads MNPNNRSEHDTIKTTENNEVPTNHVQYPLAETPNPTLEDLNYKEFLRMTADNNTEAL.

The protein belongs to the delta endotoxin family.

Promotes colloidosmotic lysis by binding to the midgut epithelial cells of Coleoptera. This is Pesticidal crystal protein Cry3Aa (cry3Aa) from Bacillus thuringiensis subsp. san diego.